A 342-amino-acid chain; its full sequence is N-acetyl-gamma-glutamyl-phosphate reductase (342 aa).

The active site involves Cys-147.

The protein belongs to the NAGSA dehydrogenase family. Type 1 subfamily.

The protein localises to the cytoplasm. The enzyme catalyses N-acetyl-L-glutamate 5-semialdehyde + phosphate + NADP(+) = N-acetyl-L-glutamyl 5-phosphate + NADPH + H(+). Its pathway is amino-acid biosynthesis; L-arginine biosynthesis; N(2)-acetyl-L-ornithine from L-glutamate: step 3/4. In terms of biological role, catalyzes the NADPH-dependent reduction of N-acetyl-5-glutamyl phosphate to yield N-acetyl-L-glutamate 5-semialdehyde. In Campylobacter jejuni subsp. jejuni serotype O:2 (strain ATCC 700819 / NCTC 11168), this protein is N-acetyl-gamma-glutamyl-phosphate reductase.